The chain runs to 373 residues: Gametogenetin-binding protein 1 (373 aa).

Disordered stretches follow at residues 26–113 (VGSK…GSQT) and 237–268 (KAQR…AVDE). Residues 36 to 49 (NRPLNRSQPSSSPE) are compositionally biased toward polar residues. The required for induction of mitochondrial fragmentation stretch occupies residues 226-373 (LYKQLQKSAM…DEMGNWPPPE (148 aa)). Residues 254–263 (SPTEERGERE) are compositionally biased toward basic and acidic residues. Residues 301-373 (KTFRSTDTVG…DEMGNWPPPE (73 aa)) form an interaction with GGN region.

Interacts with CCDC159. Interacts with GGN.

The protein resides in the cytoplasm. It localises to the membrane. Its subcellular location is the golgi apparatus. The protein localises to the mitochondrion intermembrane space. Its function is as follows. Induces mitochondrial fragmentation, possibly by promoting DNM1L-dependent fission and may play a role in mitochondrial morphogenesis during spermatogenesis. The polypeptide is Gametogenetin-binding protein 1 (Ggnbp1) (Rattus norvegicus (Rat)).